Here is a 92-residue protein sequence, read N- to C-terminus: Co-chaperonin GroES (92 aa).

This sequence belongs to the GroES chaperonin family. As to quaternary structure, heptamer of 7 subunits arranged in a ring. Interacts with the chaperonin GroEL.

The protein localises to the cytoplasm. Functionally, together with the chaperonin GroEL, plays an essential role in assisting protein folding. The GroEL-GroES system forms a nano-cage that allows encapsulation of the non-native substrate proteins and provides a physical environment optimized to promote and accelerate protein folding. GroES binds to the apical surface of the GroEL ring, thereby capping the opening of the GroEL channel. The chain is Co-chaperonin GroES from Thermotoga petrophila (strain ATCC BAA-488 / DSM 13995 / JCM 10881 / RKU-1).